The primary structure comprises 147 residues: Peptide methionine sulfoxide reductase MsrB (147 aa).

The 124-residue stretch at 8-131 (KEELKKVLTE…NSASLKFIPK (124 aa)) folds into the MsrB domain. Cys120 functions as the Nucleophile in the catalytic mechanism.

It belongs to the MsrB Met sulfoxide reductase family.

The catalysed reaction is L-methionyl-[protein] + [thioredoxin]-disulfide + H2O = L-methionyl-(R)-S-oxide-[protein] + [thioredoxin]-dithiol. The polypeptide is Peptide methionine sulfoxide reductase MsrB (Clostridium perfringens (strain ATCC 13124 / DSM 756 / JCM 1290 / NCIMB 6125 / NCTC 8237 / Type A)).